The sequence spans 92 residues: Small ribosomal subunit protein uS19 (92 aa).

This sequence belongs to the universal ribosomal protein uS19 family.

Protein S19 forms a complex with S13 that binds strongly to the 16S ribosomal RNA. This chain is Small ribosomal subunit protein uS19, found in Paramagnetospirillum magneticum (strain ATCC 700264 / AMB-1) (Magnetospirillum magneticum).